The following is a 456-amino-acid chain: Chromosomal replication initiator protein DnaA (456 aa).

Residues 1-83 form a domain I, interacts with DnaA modulators region; the sequence is MKLKILHFTS…DAFEEESNNG (83 aa). The interval 83–116 is domain II; the sequence is GVRPEIHIKVKEKKENVKSLKNNKSMLYFNTNGL. Positions 117–331 are domain III, AAA+ region; sequence SLNPFYTFEN…GILSTINAHI (215 aa). ATP contacts are provided by Gly-161, Gly-163, Lys-164, and Thr-165. Positions 332–456 are domain IV, binds dsDNA; the sequence is NLSPESSSLK…SKIQQSLDSV (125 aa).

The protein belongs to the DnaA family. In terms of assembly, oligomerizes as a right-handed, spiral filament on DNA at oriC.

Its subcellular location is the cytoplasm. Plays an essential role in the initiation and regulation of chromosomal replication. ATP-DnaA binds to the origin of replication (oriC) to initiate formation of the DNA replication initiation complex once per cell cycle. Binds the DnaA box (a 9 base pair repeat at the origin) and separates the double-stranded (ds)DNA. Forms a right-handed helical filament on oriC DNA; dsDNA binds to the exterior of the filament while single-stranded (ss)DNA is stabiized in the filament's interior. The ATP-DnaA-oriC complex binds and stabilizes one strand of the AT-rich DNA unwinding element (DUE), permitting loading of DNA polymerase. After initiation quickly degrades to an ADP-DnaA complex that is not apt for DNA replication. Binds acidic phospholipids. The sequence is that of Chromosomal replication initiator protein DnaA from Helicobacter hepaticus (strain ATCC 51449 / 3B1).